A 232-amino-acid chain; its full sequence is Heptaprenylglyceryl phosphate synthase (232 aa).

Lys12 is a sn-glycerol 1-phosphate binding site. Mg(2+)-binding residues include Asp14 and Thr40. Residues 159 to 164 (YLEYSG), Gly189, and 209 to 210 (GN) each bind sn-glycerol 1-phosphate.

This sequence belongs to the GGGP/HepGP synthase family. Group I subfamily. As to quaternary structure, homodimer. The cofactor is Mg(2+).

The enzyme catalyses sn-glycerol 1-phosphate + all-trans-heptaprenyl diphosphate = 3-heptaprenyl-sn-glycero-1-phosphate + diphosphate. It participates in membrane lipid metabolism; glycerophospholipid metabolism. In terms of biological role, prenyltransferase that catalyzes in vivo the transfer of the heptaprenyl moiety of heptaprenyl pyrophosphate (HepPP; 35 carbon atoms) to the C3 hydroxyl of sn-glycerol-1-phosphate (G1P), producing heptaprenylglyceryl phosphate (HepGP). This reaction is an ether-bond-formation step in the biosynthesis of archaea-type G1P-based membrane lipids found in Bacillales. The chain is Heptaprenylglyceryl phosphate synthase from Shouchella clausii (strain KSM-K16) (Alkalihalobacillus clausii).